Consider the following 37-residue polypeptide: MPNFSGNWKMKSSENFEELLKALGVNMMLRKIAVAAA.

The Nuclear localization signal motif lies at 21 to 31; the sequence is KALGVNMMLRK.

The protein belongs to the calycin superfamily. Fatty-acid binding protein (FABP) family. In terms of tissue distribution, embryo.

It localises to the cytoplasm. The protein resides in the endoplasmic reticulum. Its subcellular location is the nucleus. Functionally, transports retinoic acid to the nucleus. Regulates the access of retinoic acid to the nuclear retinoic acid receptors. This is Cellular retinoic acid-binding protein 2 (CRABP2) from Gallus gallus (Chicken).